The sequence spans 359 residues: UDP-3-O-acylglucosamine N-acyltransferase (359 aa).

The active-site Proton acceptor is His-253.

The protein belongs to the transferase hexapeptide repeat family. LpxD subfamily. Homotrimer.

It catalyses the reaction a UDP-3-O-[(3R)-3-hydroxyacyl]-alpha-D-glucosamine + a (3R)-hydroxyacyl-[ACP] = a UDP-2-N,3-O-bis[(3R)-3-hydroxyacyl]-alpha-D-glucosamine + holo-[ACP] + H(+). It participates in bacterial outer membrane biogenesis; LPS lipid A biosynthesis. Catalyzes the N-acylation of UDP-3-O-acylglucosamine using 3-hydroxyacyl-ACP as the acyl donor. Is involved in the biosynthesis of lipid A, a phosphorylated glycolipid that anchors the lipopolysaccharide to the outer membrane of the cell. The protein is UDP-3-O-acylglucosamine N-acyltransferase of Burkholderia lata (strain ATCC 17760 / DSM 23089 / LMG 22485 / NCIMB 9086 / R18194 / 383).